Consider the following 498-residue polypeptide: ADP,ATP carrier protein 1 (498 aa).

The Cytoplasmic portion of the chain corresponds to 1–33 (MSTSKSENYLSELRKIIWPIEQYENKKFLPLAF). Residues 34–54 (MMFCILLNYSTLRSIKDGFVV) traverse the membrane as a helical segment. C37 and C85 are joined by a disulfide. Topologically, residues 55–67 (TDIGTESISFLKT) are extracellular. Residues 68–88 (YIVLPSAVIAMIIYVKLCDIL) traverse the membrane as a helical segment. At 89 to 92 (KQEN) the chain is on the cytoplasmic side. A helical membrane pass occupies residues 93–113 (VFYVITSFFLGYFALFAFVLY). Residues 114 to 147 (PYPDLVHPDHKTIESLSLAYPNFKWFIKIVGKWS) lie on the Extracellular side of the membrane. Residues 148-168 (FASFYTIAELWGTMMLSLLFW) form a helical membrane-spanning segment. The Cytoplasmic portion of the chain corresponds to 169-184 (QFANQITKIAEAKRFY). The chain crosses the membrane as a helical span at residues 185-205 (SMFGLLANLALPVTSVVIGYF). At 206–218 (LHEKTQIVAEHLK) the chain is on the extracellular side. A helical transmembrane segment spans residues 219–239 (FVPLFVIMITSSFLIILTYRW). Residues 240 to 279 (MNKNVLTDPRLYDPALVKEKKTKAKLSFIESLKMIFTSKY) are Cytoplasmic-facing. The chain crosses the membrane as a helical span at residues 280–300 (VGYIALLIIAYGVSVNLVEGV). The Extracellular segment spans residues 301–320 (WKSKVKELYPTKEAYTIYMG). Residues 321 to 341 (QFQFYQGWVAIAFMLIGSNIL) traverse the membrane as a helical segment. Residues 342 to 348 (RKVSWLT) are Cytoplasmic-facing. A helical membrane pass occupies residues 349–369 (AAMITPLMMFITGAAFFSFIF). The Extracellular portion of the chain corresponds to 370 to 379 (FDSVIAMNLT). Residues 380 to 400 (GILASSPLTLAVMIGMIQNVL) form a helical membrane-spanning segment. The Cytoplasmic portion of the chain corresponds to 401–438 (SKGVKYSLFDATKNMAYIPLDKDLRVKGQAAVEVIGGR). 436–442 (GGRLGKS) contacts ATP. The helical transmembrane segment at 439–459 (LGKSGGAIIQSTFFILFPVFG) threads the bilayer. At 460–465 (FIEATP) the chain is on the extracellular side. The chain crosses the membrane as a helical span at residues 466 to 486 (YFASIFFIIVILWIFAVKGLN). The Cytoplasmic portion of the chain corresponds to 487–498 (KEYQVLVNKNEK).

It belongs to the ADP/ATP translocase tlc family.

The protein resides in the cell membrane. In terms of biological role, provides the rickettsial cell with host ATP in exchange for rickettsial ADP. This is an obligate exchange system. This energy acquiring activity is an important component of rickettsial parasitism. The sequence is that of ADP,ATP carrier protein 1 (tlcA) from Rickettsia prowazekii (strain Madrid E).